A 130-amino-acid chain; its full sequence is Lysozyme C (130 aa).

Positions Lys2–Leu130 constitute a C-type lysozyme domain. 4 disulfide bridges follow: Cys7–Cys128, Cys31–Cys116, Cys65–Cys81, and Cys77–Cys95. Residues Glu36 and Asp53 contribute to the active site.

The protein belongs to the glycosyl hydrolase 22 family. As to quaternary structure, monomer.

Its subcellular location is the secreted. The enzyme catalyses Hydrolysis of (1-&gt;4)-beta-linkages between N-acetylmuramic acid and N-acetyl-D-glucosamine residues in a peptidoglycan and between N-acetyl-D-glucosamine residues in chitodextrins.. Its function is as follows. Lysozymes have primarily a bacteriolytic function; those in tissues and body fluids are associated with the monocyte-macrophage system and enhance the activity of immunoagents. The protein is Lysozyme C (LYZ) of Phasianus versicolor (Green pheasant).